The sequence spans 88 residues: Protein K3 (88 aa).

An S1 motif domain is found at Leu-8–Lys-82. 2 binding to host EIF2AK2/PKR regions span residues Ser-43–Glu-53 and Lys-74–Val-79.

Belongs to the poxviridae K3 protein family. In terms of assembly, interacts with host EIF2AK2/PKR kinase.

Functionally, viral mimic of EIF2S1/eIF-2alpha that acts as a pseudosubstrate for EIF2AK2/PKR kinase. Inhibits therefore EIF2S1/eIF-2alpha phosphorylation by host EIF2AK2/PKR kinase and prevents protein synthesis shutoff. Determinant of host species specificity. The chain is Protein K3 from Vaccinia virus (strain Western Reserve) (VACV).